We begin with the raw amino-acid sequence, 115 residues long: Migration and invasion enhancer 1 (115 aa).

Residues methionine 1–valine 10 show a composition bias toward polar residues. The interval methionine 1 to glycine 22 is disordered. At serine 2 the chain carries N-acetylserine. Cysteine 30 and cysteine 33 are disulfide-bonded. Cysteine 112 carries S-geranylgeranyl cysteine lipidation. Residues valine 113–leucine 115 constitute a propeptide, removed in mature form.

Belongs to the SelWTH family. In terms of assembly, interacts with GPX1. Post-translationally, isoprenylation facilitates association with the plasma membrane and enhances the migratory phenotype of cells by inducing increased filopodia formation.

The protein resides in the cytoplasm. The protein localises to the cytosol. It is found in the cell membrane. Functionally, increases cell migration by inducing filopodia formation at the leading edge of migrating cells. Plays a role in regulation of apoptosis, possibly through control of CASP3. May be involved in a redox-related process. This chain is Migration and invasion enhancer 1 (MIEN1), found in Bos taurus (Bovine).